The sequence spans 192 residues: MRIWKVERNTLETQILVELNIDGSGKAEIDTGIGFLDHMLTLMSFHGKFDLKVICKGDTYVDDHHSVEDIGIAIGEAFKNALGDKKGIRRYSNIYIPMDESLSMVAIDISNRPYLVFNAKFDTQMIGSMSTQCFKEFFRAFVNESRVTLHINLLYGENDHHKIESIFKAFARALKEGSEIVSNEIASSKGVL.

It belongs to the imidazoleglycerol-phosphate dehydratase family.

It is found in the cytoplasm. The catalysed reaction is D-erythro-1-(imidazol-4-yl)glycerol 3-phosphate = 3-(imidazol-4-yl)-2-oxopropyl phosphate + H2O. It participates in amino-acid biosynthesis; L-histidine biosynthesis; L-histidine from 5-phospho-alpha-D-ribose 1-diphosphate: step 6/9. This is Imidazoleglycerol-phosphate dehydratase from Clostridioides difficile (strain 630) (Peptoclostridium difficile).